Here is a 216-residue protein sequence, read N- to C-terminus: MAETQTLKAEAREKGSKGAVRSLRRAGRVPAVIYGDKQSPELIAVSYKDVSALYQTGTFMSHVLDVEIGGKTERVIPRDVQFEPVRDFIIHVDFLRLGKNATVTVDVPVHFHNHEASPGIKAGGVLNIVRHEVELVCPADAIPEQLDIDLTGFEMGSSIHISAVKLPAKVSPTITDRDFTIATIAAPAAVVSADNEAKTEEAGEDKSEEKSSGKED.

Disordered regions lie at residues 1-21 and 192-216; these read MAET…GAVR and SADN…GKED. The segment covering 195–216 has biased composition (basic and acidic residues); the sequence is NEAKTEEAGEDKSEEKSSGKED.

Belongs to the bacterial ribosomal protein bL25 family. CTC subfamily. In terms of assembly, part of the 50S ribosomal subunit; part of the 5S rRNA/L5/L18/L25 subcomplex. Contacts the 5S rRNA. Binds to the 5S rRNA independently of L5 and L18.

Its function is as follows. This is one of the proteins that binds to the 5S RNA in the ribosome where it forms part of the central protuberance. This is Large ribosomal subunit protein bL25 from Parvibaculum lavamentivorans (strain DS-1 / DSM 13023 / NCIMB 13966).